A 424-amino-acid polypeptide reads, in one-letter code: Hemagglutinin-esterase (424 aa).

The signal sequence occupies residues 1–16 (MFLLPRFCLVCSIIGT). An esterase domain 1 region spans residues 7-127 (FCLVCSIIGT…NNDIWMQNKG (121 aa)). Residues 17–392 (FGFENPPTNV…PICVYDPLPI (376 aa)) lie on the Virion surface side of the membrane. Catalysis depends on S40, which acts as the Nucleophile. An intrachain disulfide couples C44 to C65. N-linked (GlcNAc...) asparagine; by host glycosylation is found at N54, N89, N153, N236, and N301. Intrachain disulfides connect C113–C162, C197–C276, and C205–C249. Residues 128-266 (LFYTQVYKKM…GNYLAISNEL (139 aa)) form a receptor binding region. Residues 267–379 (LLTVPTKAIC…NCPTAASIIS (113 aa)) are esterase domain 2. Residues C307 and C312 are joined by a disulfide bond. The N-linked (GlcNAc...) asparagine; by host glycan is linked to N316. Residues D326 and H329 each act as charge relay system in the active site. A disulfide bridge links C347 with C371. An N-linked (GlcNAc...) asparagine; by host glycan is attached at N358. The helical transmembrane segment at 393-413 (ILLGILLGVAVIVIVVLLLYF) threads the bilayer. Residues 414–424 (MVDNGIRQHYA) are Intravirion-facing.

It belongs to the influenza type C/coronaviruses hemagglutinin-esterase family. In terms of assembly, homodimer; disulfide-linked. Forms a complex with the M protein in the pre-Golgi. Associates then with S-M complex to form a ternary complex S-M-HE. N-glycosylated in the host RER.

Its subcellular location is the virion membrane. It is found in the host cell membrane. It carries out the reaction N-acetyl-9-O-acetylneuraminate + H2O = N-acetylneuraminate + acetate + H(+). The enzyme catalyses N-acetyl-4-O-acetylneuraminate + H2O = N-acetylneuraminate + acetate + H(+). Functionally, structural protein that makes short spikes at the surface of the virus. Contains receptor binding and receptor-destroying activities. Mediates de-O-acetylation of N-acetyl-4-O-acetylneuraminic acid, which is probably the receptor determinant recognized by the virus on the surface of erythrocytes and susceptible cells. This receptor-destroying activity is important for virus release as it probably helps preventing self-aggregation and ensures the efficient spread of the progeny virus from cell to cell. May serve as a secondary viral attachment protein for initiating infection, the spike protein being the major one. May become a target for both the humoral and the cellular branches of the immune system. The polypeptide is Hemagglutinin-esterase (Sus scrofa (Pig)).